A 155-amino-acid chain; its full sequence is Pathogenesis-related protein STH-21 (155 aa).

This sequence belongs to the BetVI family.

The protein is Pathogenesis-related protein STH-21 (STH-21) of Solanum tuberosum (Potato).